Consider the following 61-residue polypeptide: Small ribosomal subunit protein uS14 (61 aa).

Positions 24, 27, 40, and 43 each coordinate Zn(2+).

The protein belongs to the universal ribosomal protein uS14 family. Zinc-binding uS14 subfamily. Part of the 30S ribosomal subunit. Contacts proteins S3 and S10. The cofactor is Zn(2+).

In terms of biological role, binds 16S rRNA, required for the assembly of 30S particles and may also be responsible for determining the conformation of the 16S rRNA at the A site. The chain is Small ribosomal subunit protein uS14 from Elusimicrobium minutum (strain Pei191).